Reading from the N-terminus, the 492-residue chain is JmjC domain-containing histone demethylation protein 1 (492 aa).

The PHD-type; atypical zinc finger occupies 4–72; the sequence is PNICQHCQLK…SYRCPNHKEG (69 aa). The JmjC domain maps to 254–409; the sequence is TAVRQNDLVD…THLKIVEIEK (156 aa). Substrate is bound at residue Thr302. Fe cation contacts are provided by His305 and Asp307. Substrate is bound at residue Lys322. A Fe cation-binding site is contributed by His377.

Belongs to the JHDM1 histone demethylase family. It depends on Fe(2+) as a cofactor.

It localises to the nucleus. It carries out the reaction N(6),N(6)-dimethyl-L-lysyl(36)-[histone H3] + 2 2-oxoglutarate + 2 O2 = L-lysyl(36)-[histone H3] + 2 formaldehyde + 2 succinate + 2 CO2. Functionally, histone demethylase that specifically demethylates 'Lys-36' of histone H3, thereby playing a central role in histone code. Does not demethylate H3 'Lys-4' nor 'Lys-79'. This Saccharomyces cerevisiae (strain ATCC 204508 / S288c) (Baker's yeast) protein is JmjC domain-containing histone demethylation protein 1 (JHD1).